Consider the following 300-residue polypeptide: Ribosomal RNA small subunit methyltransferase H (300 aa).

Residues 36 to 38 (GGH), Asp-55, Leu-89, Asp-103, and Gln-110 each bind S-adenosyl-L-methionine.

It belongs to the methyltransferase superfamily. RsmH family.

The protein localises to the cytoplasm. It catalyses the reaction cytidine(1402) in 16S rRNA + S-adenosyl-L-methionine = N(4)-methylcytidine(1402) in 16S rRNA + S-adenosyl-L-homocysteine + H(+). Specifically methylates the N4 position of cytidine in position 1402 (C1402) of 16S rRNA. This Thermotoga neapolitana (strain ATCC 49049 / DSM 4359 / NBRC 107923 / NS-E) protein is Ribosomal RNA small subunit methyltransferase H.